An 877-amino-acid polypeptide reads, in one-letter code: Valine--tRNA ligase (877 aa).

Residues 46 to 56 (PYPTGSIHMGH) carry the 'HIGH' region motif. A 'KMSKS' region motif is present at residues 529–533 (KMSKS). Residue K532 coordinates ATP.

Belongs to the class-I aminoacyl-tRNA synthetase family. ValS type 2 subfamily.

The protein resides in the cytoplasm. The enzyme catalyses tRNA(Val) + L-valine + ATP = L-valyl-tRNA(Val) + AMP + diphosphate. Catalyzes the attachment of valine to tRNA(Val). As ValRS can inadvertently accommodate and process structurally similar amino acids such as threonine, to avoid such errors, it has a 'posttransfer' editing activity that hydrolyzes mischarged Thr-tRNA(Val) in a tRNA-dependent manner. The sequence is that of Valine--tRNA ligase from Methanothermobacter thermautotrophicus (strain ATCC 29096 / DSM 1053 / JCM 10044 / NBRC 100330 / Delta H) (Methanobacterium thermoautotrophicum).